Here is a 487-residue protein sequence, read N- to C-terminus: Serine/threonine-protein kinase BSK8 (487 aa).

Gly2 is lipidated: N-myristoyl glycine. Phosphoserine is present on Ser20. The 267-residue stretch at 59-325 folds into the Protein kinase domain; sequence ENIVSEHGER…DLEIASHQLL (267 aa). Residues 65–73, Asn71, Lys87, and 133–135 contribute to the ATP site; these read HGERAPNVV and EFM. The active-site Proton acceptor is Asp181. ATP is bound by residues 185–186 and Asn205; that span reads YR. Phosphoserine is present on Ser213.

Belongs to the protein kinase superfamily. Ser/Thr protein kinase family. In terms of assembly, interacts with ASK7/BIN2, BSK1, BSK5, BSK6 and BSK11. Interacts with BSL2. Post-translationally, phosphorylated by BRI1, ASK7/BIN2 and ASK9/BIL2.

It localises to the cell membrane. It catalyses the reaction L-seryl-[protein] + ATP = O-phospho-L-seryl-[protein] + ADP + H(+). The enzyme catalyses L-threonyl-[protein] + ATP = O-phospho-L-threonyl-[protein] + ADP + H(+). Probable serine/threonine kinase that acts as a positive regulator of brassinosteroid (BR) signaling downstream of the receptor kinase BRI1. Functions redundantly with BSK3, BSK4, BSK6 and BSK7. Involved in the regulation of sucrose-phosphate synthase 1 (SPS1) in the context of sucrose resuply after starvation. Activates BSL2, a phosphatase that may dephosphorylate SPS1, leading to the activation of SPS1. The polypeptide is Serine/threonine-protein kinase BSK8 (Arabidopsis thaliana (Mouse-ear cress)).